The following is a 274-amino-acid chain: Large ribosomal subunit protein uL2 (274 aa).

The segment at V223–K274 is disordered.

It belongs to the universal ribosomal protein uL2 family. Part of the 50S ribosomal subunit. Forms a bridge to the 30S subunit in the 70S ribosome.

In terms of biological role, one of the primary rRNA binding proteins. Required for association of the 30S and 50S subunits to form the 70S ribosome, for tRNA binding and peptide bond formation. It has been suggested to have peptidyltransferase activity; this is somewhat controversial. Makes several contacts with the 16S rRNA in the 70S ribosome. The protein is Large ribosomal subunit protein uL2 of Aliivibrio fischeri (strain ATCC 700601 / ES114) (Vibrio fischeri).